Reading from the N-terminus, the 134-residue chain is Protein Turandot E (134 aa).

The first 38 residues, 1-38 (MSYNRTLHSTTSILKMNSALQISCLLLVLGCLLGSGHG), serve as a signal peptide directing secretion.

Belongs to the Turandot family.

The protein resides in the secreted. Its function is as follows. A humoral factor that may play a role in stress tolerance. The polypeptide is Protein Turandot E (Drosophila yakuba (Fruit fly)).